The chain runs to 770 residues: Protein PAT1 homolog 1 (770 aa).

The interval 1–42 (MFRYESLEDCPLDEDEDAFQGLGEEDEEIDQFNDDTFGSGAV) is disordered. The tract at residues 1-84 (MFRYESLEDC…EMDLLGDHEE (84 aa)) is region A; interaction with DDX6/RCK. Residues 1–397 (MFRYESLEDC…HRVSHQDHLR (397 aa)) are involved in nuclear foci localization. Over residues 7–33 (LEDCPLDEDEDAFQGLGEEDEEIDQFN) the composition is skewed to acidic residues. Residues 85 to 388 (NLAERLSKMV…LNGTGDRGGH (304 aa)) form a region N; interaction with decapping machinery region. The Nuclear export signal signature appears at 86-95 (LAERLSKMVI). The residue at position 177 (serine 177) is a Phosphoserine. A Phosphothreonine modification is found at threonine 178. A phosphoserine mark is found at serine 179 and serine 184. At threonine 194 the chain carries Phosphothreonine. 3 positions are modified to asymmetric dimethylarginine: arginine 217, arginine 223, and arginine 263. The interval 223 to 397 (RYPAPYGERM…HRVSHQDHLR (175 aa)) is involved in RNA-binding. Serine 278 is subject to Phosphoserine. The residue at position 284 (arginine 284) is an Asymmetric dimethylarginine. Disordered regions lie at residues 320–341 (SAPP…PHLQ) and 369–394 (QLQS…SHQD). A compositionally biased stretch (pro residues) spans 321–337 (APPPATPPPQQHPPGPG). Low complexity predominate over residues 369-380 (QLQSRNQHRNLN). An Omega-N-methylarginine modification is found at arginine 385. The segment covering 385 to 394 (RGGHRVSHQD) has biased composition (basic and acidic residues). The segment at 389 to 448 (RVSHQDHLRKDPYANLMLQREKDWVSKIQMMQLQSTDPYLDDFYYQNYFEKLEKSSAAEE) is region H. The involved in nuclear speckle localization stretch occupies residues 398–770 (KDPYANLMLQ…TKLQLVQGMR (373 aa)). The segment at 449–770 (MQGDGPKKER…TKLQLVQGMR (322 aa)) is region C.

The protein belongs to the PAT1 family. In terms of assembly, interacts (via region A) with DDX6/RCK. Interacts (via region H and region C) with LSM1 and LSM4. Interacts (via region N) with DCP1A, DCP2, EDC3, EDC4 and XRN1. Interacts with the CCR4-NOT complex. Interacts with the Lsm-containing SMN-Sm protein complex. Interacts with EIF4ENIF1/4E-T.

The protein localises to the cytoplasm. It localises to the P-body. It is found in the nucleus. The protein resides in the PML body. Its subcellular location is the nucleus speckle. Functionally, RNA-binding protein involved in deadenylation-dependent decapping of mRNAs, leading to the degradation of mRNAs. Acts as a scaffold protein that connects deadenylation and decapping machinery. Required for cytoplasmic mRNA processing body (P-body) assembly. In Rattus norvegicus (Rat), this protein is Protein PAT1 homolog 1 (Patl1).